Here is a 487-residue protein sequence, read N- to C-terminus: GTPase Der (487 aa).

EngA-type G domains are found at residues 3 to 166 (PVIA…PRDA) and 193 to 366 (IKIA…KSAV). GTP contacts are provided by residues 9–16 (GRPNVGKS), 56–60 (DTGGI), 118–121 (NKID), 199–206 (GRPNVGKS), 246–250 (DTAGV), and 311–314 (NKWD). Positions 367–451 (TRWPTSRLTQ…PIRIEYKGGE (85 aa)) constitute a KH-like domain. The span at 449-461 (GGENPFEGKKNTL) shows a compositional bias: basic and acidic residues. The interval 449-487 (GGENPFEGKKNTLTDRQVNKKRRLMSHHKKAEKKRRDKR) is disordered. Basic residues predominate over residues 467–487 (NKKRRLMSHHKKAEKKRRDKR).

It belongs to the TRAFAC class TrmE-Era-EngA-EngB-Septin-like GTPase superfamily. EngA (Der) GTPase family. As to quaternary structure, associates with the 50S ribosomal subunit.

GTPase that plays an essential role in the late steps of ribosome biogenesis. The protein is GTPase Der of Pseudomonas putida (strain GB-1).